We begin with the raw amino-acid sequence, 361 residues long: Protein RecA (361 aa).

Glycine 77–threonine 84 contacts ATP.

This sequence belongs to the RecA family.

The protein resides in the cytoplasm. In terms of biological role, can catalyze the hydrolysis of ATP in the presence of single-stranded DNA, the ATP-dependent uptake of single-stranded DNA by duplex DNA, and the ATP-dependent hybridization of homologous single-stranded DNAs. It interacts with LexA causing its activation and leading to its autocatalytic cleavage. The chain is Protein RecA from Rhizobium etli.